The sequence spans 311 residues: Probable dihydroorotate dehydrogenase A (fumarate) (311 aa).

Substrate-binding positions include lysine 45, 69–73, and asparagine 128; that span reads NSMGL. 45–46 is a binding site for FMN; it reads KT. Residue asparagine 128 coordinates FMN. Residue cysteine 131 is the Nucleophile of the active site. Residues lysine 165 and valine 193 each contribute to the FMN site. 194-195 provides a ligand contact to substrate; the sequence is NS. Residues glycine 220, 248-249, and 270-271 contribute to the FMN site; these read GG and GT.

It belongs to the dihydroorotate dehydrogenase family. Type 1 subfamily. In terms of assembly, homodimer. FMN serves as cofactor.

The protein localises to the cytoplasm. It carries out the reaction (S)-dihydroorotate + fumarate = orotate + succinate. It functions in the pathway pyrimidine metabolism; UMP biosynthesis via de novo pathway. Its function is as follows. Catalyzes the conversion of dihydroorotate to orotate with fumarate as the electron acceptor. The polypeptide is Probable dihydroorotate dehydrogenase A (fumarate) (pyrDA) (Streptococcus pneumoniae serotype 4 (strain ATCC BAA-334 / TIGR4)).